Reading from the N-terminus, the 728-residue chain is 1,4-alpha-glucan branching enzyme GlgB (728 aa).

D409 functions as the Nucleophile in the catalytic mechanism. E462 (proton donor) is an active-site residue.

It belongs to the glycosyl hydrolase 13 family. GlgB subfamily. In terms of assembly, monomer.

The enzyme catalyses Transfers a segment of a (1-&gt;4)-alpha-D-glucan chain to a primary hydroxy group in a similar glucan chain.. It functions in the pathway glycan biosynthesis; glycogen biosynthesis. Its function is as follows. Catalyzes the formation of the alpha-1,6-glucosidic linkages in glycogen by scission of a 1,4-alpha-linked oligosaccharide from growing alpha-1,4-glucan chains and the subsequent attachment of the oligosaccharide to the alpha-1,6 position. This is 1,4-alpha-glucan branching enzyme GlgB from Cereibacter sphaeroides (strain ATCC 17023 / DSM 158 / JCM 6121 / CCUG 31486 / LMG 2827 / NBRC 12203 / NCIMB 8253 / ATH 2.4.1.) (Rhodobacter sphaeroides).